The sequence spans 183 residues: Peptide deformylase-like (183 aa).

The active site involves E140.

Belongs to the polypeptide deformylase family.

This chain is Peptide deformylase-like, found in Rickettsia conorii (strain ATCC VR-613 / Malish 7).